Reading from the N-terminus, the 476-residue chain is Glycogen synthase (476 aa).

Residue lysine 15 participates in ADP-alpha-D-glucose binding.

The protein belongs to the glycosyltransferase 1 family. Bacterial/plant glycogen synthase subfamily.

The enzyme catalyses [(1-&gt;4)-alpha-D-glucosyl](n) + ADP-alpha-D-glucose = [(1-&gt;4)-alpha-D-glucosyl](n+1) + ADP + H(+). It functions in the pathway glycan biosynthesis; glycogen biosynthesis. Synthesizes alpha-1,4-glucan chains using ADP-glucose. This is Glycogen synthase from Haemophilus influenzae (strain PittEE).